A 560-amino-acid polypeptide reads, in one-letter code: E3 SUMO-protein ligase CBX4 (560 aa).

The interval 1–75 (MELPAVGEHV…LMGYRKRGPK (75 aa)) is involved in interaction with H3C15 and H3C1. The segment at 1 to 539 (MELPAVGEHV…LSEFKPFFGN (539 aa)) is interaction with BMI1. A Chromo domain is found at 11–69 (FAVESIEKKRIRKGRVEYLVKWRGWSPKYNTWEPEENILDPRLLIAFQNRERQEQLMGY). Residues lysine 77, lysine 106, lysine 114, and lysine 125 each participate in a glycyl lysine isopeptide (Lys-Gly) (interchain with G-Cter in SUMO2) cross-link. Residues 92–152 (VLTGLQDSST…PPGKSGKYYY (61 aa)) are disordered. Lysine 149 carries the post-translational modification N6-acetyllysine; alternate. A Glycyl lysine isopeptide (Lys-Gly) (interchain with G-Cter in SUMO2); alternate cross-link involves residue lysine 149. Glycyl lysine isopeptide (Lys-Gly) (interchain with G-Cter in SUMO2) cross-links involve residues lysine 157, lysine 167, and lysine 178. A Phosphoserine modification is found at serine 182. Residues lysine 191, lysine 205, lysine 212, lysine 223, lysine 249, lysine 268, lysine 278, and lysine 280 each participate in a glycyl lysine isopeptide (Lys-Gly) (interchain with G-Cter in SUMO2) cross-link. The tract at residues 217-243 (AAGAPGKGSEKGPPNGMMPAPKEAVTG) is disordered. Basic and acidic residues-rich tracts occupy residues 281–291 (SGEVAEGEARS) and 298–331 (AADE…REEE). Residues 281-404 (SGEVAEGEAR…HHHHHHAVGL (124 aa)) form a disordered region. Residues lysine 320, lysine 352, and lysine 365 each participate in a glycyl lysine isopeptide (Lys-Gly) (interchain with G-Cter in SUMO2) cross-link. Residues 380–401 (PSHHPHPHPHHHHHHHHHHHHA) are compositionally biased toward basic residues. The residue at position 467 (serine 467) is a Phosphoserine. Residue lysine 494 forms a Glycyl lysine isopeptide (Lys-Gly) (interchain with G-Cter in SUMO2); alternate linkage. Lysine 494 is covalently cross-linked (Glycyl lysine isopeptide (Lys-Gly) (interchain with G-Cter in SUMO); alternate). Threonine 497 carries the phosphothreonine; by HIPK2 modification. Residues 509–521 (AAPTTTAEKPPAE) show a composition bias toward low complexity. The disordered stretch occupies residues 509–528 (AAPTTTAEKPPAEAQDEPAE). Residues 531–556 (SEFKPFFGNIIITDVTANCLTVTFKE) are involved in interaction with H3C15 and RNF2. Residues 540-560 (IIITDVTANCLTVTFKEYVTV) are interaction with RNF2.

As to quaternary structure, interacts with histone H3-K9Me3. Interacts with CHTOP. Component of a PRC1-like complex. The composition of the PRC1 complex differs between the PRC1 complex in pluripotent embryonic stem cells containing RNF2, CBX7 and PCGF2, and the PRC1 complex in differentiating cells containing RNF2, CBX2, CBX4 and BMI1. Self-associates. Interacts with SUV39H1 and HIPK2. Interacts with CSNK2B. May interact with H3C15, H3C1 and RNF2. Interacts with SUMO1P1/SUMO5. Interacts with PRDM1/Blimp-1. Post-translationally, ubiquitinated. Ubiquitination regulates the function of the Polycomb group (PcG) multiprotein PRC1-like complex. Deubiquitinated by USP26. Phosphorylated on Thr-497 by HIPK2 upon DNA damage. This phosphorylation stimulates E3 SUMO-protein ligase activity and promotes sumoylation on Lys-494, as well as sumoylation of other target proteins, such as HNRNPK. As to expression, ubiquitous.

The protein resides in the nucleus. It is found in the nucleus speckle. Its pathway is protein modification; protein sumoylation. E3 SUMO-protein ligase that catalyzes sumoylation of target proteins by promoting the transfer of SUMO from the E2 enzyme to the substrate. Involved in the sumoylation of HNRNPK, a p53/TP53 transcriptional coactivator, hence indirectly regulates p53/TP53 transcriptional activation resulting in p21/CDKN1A expression. Monosumoylates ZNF131. In terms of biological role, component of a Polycomb group (PcG) multiprotein PRC1-like complex, a complex class required to maintain the transcriptionally repressive state of many genes, including Hox genes, throughout development. PcG PRC1 complex acts via chromatin remodeling and modification of histones; it mediates monoubiquitination of histone H2A 'Lys-119', rendering chromatin heritably changed in its expressibility. Binds to histone H3 trimethylated at 'Lys-9' (H3K9me3). Plays a role in the lineage differentiation of the germ layers in embryonic development. In Homo sapiens (Human), this protein is E3 SUMO-protein ligase CBX4 (CBX4).